Reading from the N-terminus, the 107-residue chain is Pathogenesis-related protein PR-4 (107 aa).

In terms of domain architecture, Barwin spans Gln-1–Asp-107. 3 cysteine pairs are disulfide-bonded: Cys-14/Cys-46, Cys-35/Cys-69, and Cys-49/Cys-105.

In terms of tissue distribution, preferentially expressed in the tissue surrounding the abscission zone of fruitlets.

The protein localises to the secreted. The protein resides in the cell wall. Its function is as follows. May be involved in protecting plant tissues from pathogen infection. This chain is Pathogenesis-related protein PR-4, found in Prunus persica (Peach).